Here is a 188-residue protein sequence, read N- to C-terminus: MKVIASSLRKGNVVDIDGRLYVVLTAQNFHPGKGTPVTQVDMRRISDGTKVSERWKTTEQVERATVDEREYDFLYEDGEGYHFMEPVSYDQVVVSPDVVGDGKVFLTEGMRVYLQTHNDVAISIEFPQKVTVEITETEPVVKGQTASSSYKPAMCTNGLRVMVPPHISAGTRIVINTEDLSYVERAKD.

This sequence belongs to the elongation factor P family.

Its subcellular location is the cytoplasm. It functions in the pathway protein biosynthesis; polypeptide chain elongation. Involved in peptide bond synthesis. Stimulates efficient translation and peptide-bond synthesis on native or reconstituted 70S ribosomes in vitro. Probably functions indirectly by altering the affinity of the ribosome for aminoacyl-tRNA, thus increasing their reactivity as acceptors for peptidyl transferase. In Cereibacter sphaeroides (strain KD131 / KCTC 12085) (Rhodobacter sphaeroides), this protein is Elongation factor P.